The following is a 357-amino-acid chain: Peptide chain release factor 1 (357 aa).

The residue at position 234 (Gln-234) is an N5-methylglutamine. A compositionally biased stretch (basic and acidic residues) spans 284–307; sequence KKQEQRSNDRKQQVGSGDRSERIR. The tract at residues 284-313 is disordered; that stretch reads KKQEQRSNDRKQQVGSGDRSERIRTYNFPQ.

It belongs to the prokaryotic/mitochondrial release factor family. Methylated by PrmC. Methylation increases the termination efficiency of RF1.

The protein resides in the cytoplasm. Its function is as follows. Peptide chain release factor 1 directs the termination of translation in response to the peptide chain termination codons UAG and UAA. The chain is Peptide chain release factor 1 from Borrelia hermsii (strain HS1 / DAH).